Consider the following 510-residue polypeptide: uncharacterized protein (510 aa).

The protein to B.subtilis SpoVR.

This is an uncharacterized protein from Escherichia coli (strain K12).